The sequence spans 331 residues: RNA 3'-terminal phosphate cyclase (331 aa).

ATP-binding positions include Gln-100 and 276–280 (HLADQ). His-301 acts as the Tele-AMP-histidine intermediate in catalysis.

Belongs to the RNA 3'-terminal cyclase family. Type 1 subfamily.

It localises to the cytoplasm. It catalyses the reaction a 3'-end 3'-phospho-ribonucleotide-RNA + ATP = a 3'-end 2',3'-cyclophospho-ribonucleotide-RNA + AMP + diphosphate. In terms of biological role, catalyzes the conversion of 3'-phosphate to a 2',3'-cyclic phosphodiester at the end of RNA. The mechanism of action of the enzyme occurs in 3 steps: (A) adenylation of the enzyme by ATP; (B) transfer of adenylate to an RNA-N3'P to produce RNA-N3'PP5'A; (C) and attack of the adjacent 2'-hydroxyl on the 3'-phosphorus in the diester linkage to produce the cyclic end product. The biological role of this enzyme is unknown but it is likely to function in some aspects of cellular RNA processing. This is RNA 3'-terminal phosphate cyclase from Methanococcoides burtonii (strain DSM 6242 / NBRC 107633 / OCM 468 / ACE-M).